A 490-amino-acid polypeptide reads, in one-letter code: Delta(14)-sterol reductase (490 aa).

The next 7 helical transmembrane spans lie at 23-43, 80-100, 136-156, 160-180, 230-250, 255-275, and 324-344; these read FGGP…VHVF, VFGL…ALSL, LAIL…WTFI, FAQI…FVYV, EFME…AFIA, LYGY…FYVF, and QLGA…YSIF. Residues K351, R355, I378, W383, and 390–391 contribute to the NADP(+) site; that span reads NY. Residues 436–456 traverse the membrane as a helical segment; sequence ARGWGIVFTYFYILYFAILLI. NADP(+) is bound by residues D462, 466 to 470, and Y477; that span reads CSKKY.

This sequence belongs to the ERG4/ERG24 family.

Its subcellular location is the membrane. It carries out the reaction 4,4-dimethyl-5alpha-cholesta-8,24-dien-3beta-ol + NADP(+) = 4,4-dimethyl-5alpha-cholesta-8,14,24-trien-3beta-ol + NADPH + H(+). It functions in the pathway steroid biosynthesis; zymosterol biosynthesis; zymosterol from lanosterol: step 2/6. Its function is as follows. Reduces the C14=C15 double bond of 4,4-dimethyl-cholesta-8,14,24-trienol to produce 4,4-dimethyl-cholesta-8,24-dienol. The protein is Delta(14)-sterol reductase (erg-3) of Neurospora crassa (strain ATCC 24698 / 74-OR23-1A / CBS 708.71 / DSM 1257 / FGSC 987).